A 352-amino-acid polypeptide reads, in one-letter code: MSKQPSLSYKDAGVDIDAGEALVERIKSVAKRTARPEVMGGLGGFGALCEIPAGYKQPVLVSGTDGVGTKLRLALNLNKHDSIGQDLVAMCVNDLVVCGAEPLFFLDYYATGKLNVDVAATVVTGIGAGCELAGCSLVGGETAEMPGMYEGEDYDLAGFCVGVVEKAEIIDGSKVATGDALIALPSSGPHSNGYSLIRKIIEVSGADIETVQLDGKPLTELLMAPTRIYVKPLLKLIKDTGAVKAMAHITGGGLLDNIPRVLPKGAQAVVDVASWNRPAVFDWLQEKGNVDETEMHRVLNCGVGMVICVAQEHVEVALNTLRDAGEQPWVIGQIAAAAEGAAQVELKNLKAH.

It belongs to the AIR synthase family.

Its subcellular location is the cytoplasm. The catalysed reaction is 2-formamido-N(1)-(5-O-phospho-beta-D-ribosyl)acetamidine + ATP = 5-amino-1-(5-phospho-beta-D-ribosyl)imidazole + ADP + phosphate + H(+). Its pathway is purine metabolism; IMP biosynthesis via de novo pathway; 5-amino-1-(5-phospho-D-ribosyl)imidazole from N(2)-formyl-N(1)-(5-phospho-D-ribosyl)glycinamide: step 2/2. The chain is Phosphoribosylformylglycinamidine cyclo-ligase from Pseudomonas fluorescens (strain Pf0-1).